A 92-amino-acid chain; its full sequence is Small ribosomal subunit protein uS19 (92 aa).

The protein belongs to the universal ribosomal protein uS19 family.

In terms of biological role, protein S19 forms a complex with S13 that binds strongly to the 16S ribosomal RNA. The chain is Small ribosomal subunit protein uS19 from Ruegeria pomeroyi (strain ATCC 700808 / DSM 15171 / DSS-3) (Silicibacter pomeroyi).